The sequence spans 315 residues: Secreted frizzled-related protein 5 (315 aa).

Residues 1-27 (MRAAAGGARAAVLALLLGALHGAPARG) form the signal peptide. The region spanning 46–163 (SKPPQCLDIP…PLDNDLCIAV (118 aa)) is the FZ domain. 8 disulfide bridges follow: cysteine 51/cysteine 114, cysteine 61/cysteine 107, cysteine 98/cysteine 133, cysteine 122/cysteine 160, cysteine 126/cysteine 150, cysteine 179/cysteine 251, cysteine 182/cysteine 253, and cysteine 196/cysteine 301. Residues 179-301 (CAQCEMEHSA…AVKFMFSYPC (123 aa)) enclose the NTR domain.

This sequence belongs to the secreted frizzled-related protein (sFRP) family. As to expression, strongly expressed in the retinal pigment epithelium (RPE). Weak expression in retina, brain, heart, liver, kidney, testis and muscle.

The protein localises to the secreted. Soluble frizzled-related proteins (sFRPS) function as modulators of Wnt signaling through direct interaction with Wnts. They have a role in regulating cell growth and differentiation in specific cell types. SFRP5 may be involved in determining the polarity of photoreceptor, and perhaps other, cells in the retina. Inhibits Wnt8 signaling, in vitro. The polypeptide is Secreted frizzled-related protein 5 (SFRP5) (Bos taurus (Bovine)).